The chain runs to 168 residues: Dihydrofolate reductase (168 aa).

In terms of domain architecture, DHFR spans M1–K164. I5–A7 provides a ligand contact to substrate. NADP(+)-binding positions include W6–A7 and I14–K19. Position 27 (E27) interacts with substrate. Residue G43–T46 coordinates NADP(+). R58 is a substrate binding site. NADP(+) is bound by residues L63–D66 and T99–I104. T118 is a binding site for substrate.

It belongs to the dihydrofolate reductase family.

It carries out the reaction (6S)-5,6,7,8-tetrahydrofolate + NADP(+) = 7,8-dihydrofolate + NADPH + H(+). Its pathway is cofactor biosynthesis; tetrahydrofolate biosynthesis; 5,6,7,8-tetrahydrofolate from 7,8-dihydrofolate: step 1/1. In terms of biological role, key enzyme in folate metabolism. Catalyzes an essential reaction for de novo glycine and purine synthesis, and for DNA precursor synthesis. This chain is Dihydrofolate reductase (folA), found in Lactococcus lactis subsp. lactis (strain IL1403) (Streptococcus lactis).